The sequence spans 62 residues: uncharacterized protein (62 aa).

Its subcellular location is the mitochondrion. This is an uncharacterized protein from Marchantia polymorpha (Common liverwort).